Consider the following 970-residue polypeptide: Toxin subunit YenC2 (970 aa).

RHS repeat units lie at residues 168–182 (AGQC…GLIQ), 297–311 (GVVT…TQRL), 329–343 (LQDL…GNVL), 361–375 (VPEN…YQLV), 408–422 (NYTR…GNLM), 500–514 (DDSE…SQRI), 580–594 (NDQI…TCSS), 606–620 (SMEE…AVWA), and 640–654 (DATG…YYQP). The tract at residues 610–690 (YYPYGGTAVW…PLRLTDPDGM (81 aa)) is RHS-repeat associated core domain. Positions 849 to 950 (TEAFITGIRS…YNCSGIISGL (102 aa)) are deaminase domain.

The protein belongs to the RHS family. Semipurified toxin complex consists of at least YenA1-YenA2-YenB-YenC1-YenC2-Chi1-Chi2. YenB and the N-terminus of YenC2 form a large hollow shell of beta-strands. The shell is closed at both ends, within which the C-terminus of YenC2 is probably found. The C-terminal region dissociates from the YenB-YenC2 complex at pH 4.5 but not 7.5. The Yen-TC:K9 subcomplex is about 26 nm tall and 22 nm in diameter with 5-fold symmetry and 5 copies of YenA1, YenA2, Chi1 and Chi2; the chitinase subunits may be solvent accessible on the exterior the complex. The Yen-TC:K9 subcomplex has no insecticidal activity. The native complex with additional YenB, YenC1 and YenC2 subunits is 16 nm taller and is insecticidal; the toxicity-conferring subunits are present at about 1 copy each.

Its subcellular location is the secreted. Toxin complex is secreted when grown at 25 degrees Celsius or less; at higher temperatures the proteins are present intracellularly but not secreted. Its function is as follows. Part of an orally active toxin complex (TC) with strong insecticidal effects on larvae of the Coleoptera Costelytra zealandica, Acrossidius tasmania and Adoryphorus couloni and some Lepidoptera larvae. The TC has an endochitinase activity. In Yersinia entomophaga, this protein is Toxin subunit YenC2.